We begin with the raw amino-acid sequence, 631 residues long: Dolichyl-diphosphooligosaccharide--protein glycosyltransferase subunit 2 (631 aa).

The signal sequence occupies residues 1–22 (MAPPGSSAVFLLALTITASTQA). Residues 23–540 (LTPTHYLTKH…REPEKRPPTV (518 aa)) lie on the Lumenal side of the membrane. The N-linked (GlcNAc...) asparagine glycan is linked to Asn-106. Residue Lys-154 forms a Glycyl lysine isopeptide (Lys-Gly) (interchain with G-Cter in ubiquitin) linkage. A helical membrane pass occupies residues 541 to 561 (VSNTFTALILSPLLLLFALWI). Residues 562 to 571 (RIGANVSNFT) are Cytoplasmic-facing. The helical transmembrane segment at 572–592 (FAPSTVIFHLGHAAMLGLMYV) threads the bilayer. The Lumenal segment spans residues 593 to 596 (YWTQ). Residues 597-617 (LNMFQTLKYLAVLGTVTFLAG) traverse the membrane as a helical segment. Residues 618 to 631 (NRMLAQQAVKRTAH) are Cytoplasmic-facing.

The protein belongs to the SWP1 family. As to quaternary structure, component of the oligosaccharyltransferase (OST) complex. OST exists in two different complex forms which contain common core subunits RPN1, RPN2, OST48, OST4, DAD1 and TMEM258, either STT3A or STT3B as catalytic subunits, and form-specific accessory subunits. STT3A complex assembly occurs through the formation of 3 subcomplexes. Subcomplex 1 contains RPN1 and TMEM258, subcomplex 2 contains the STT3A-specific subunits STT3A, DC2/OSTC, and KCP2 as well as the core subunit OST4, and subcomplex 3 contains RPN2, DAD1, and OST48. The STT3A complex can form stable complexes with the Sec61 complex or with both the Sec61 and TRAP complexes. Interacts with DDI2. Interacts with TMEM35A/NACHO.

It is found in the endoplasmic reticulum. The protein resides in the endoplasmic reticulum membrane. It functions in the pathway protein modification; protein glycosylation. Subunit of the oligosaccharyl transferase (OST) complex that catalyzes the initial transfer of a defined glycan (Glc(3)Man(9)GlcNAc(2) in eukaryotes) from the lipid carrier dolichol-pyrophosphate to an asparagine residue within an Asn-X-Ser/Thr consensus motif in nascent polypeptide chains, the first step in protein N-glycosylation. N-glycosylation occurs cotranslationally and the complex associates with the Sec61 complex at the channel-forming translocon complex that mediates protein translocation across the endoplasmic reticulum (ER). All subunits are required for a maximal enzyme activity. This chain is Dolichyl-diphosphooligosaccharide--protein glycosyltransferase subunit 2, found in Rattus norvegicus (Rat).